A 54-amino-acid polypeptide reads, in one-letter code: UPF0391 membrane protein RC1_1636 (54 aa).

2 consecutive transmembrane segments (helical) span residues Tyr3 to Ile23 and Ile30 to Leu50.

It belongs to the UPF0391 family.

It localises to the cell membrane. This chain is UPF0391 membrane protein RC1_1636, found in Rhodospirillum centenum (strain ATCC 51521 / SW).